The primary structure comprises 303 residues: Aspartate carbamoyltransferase catalytic subunit (303 aa).

2 residues coordinate carbamoyl phosphate: Arg49 and Thr50. Lys77 lines the L-aspartate pocket. Residues Arg99, His126, and Gln129 each coordinate carbamoyl phosphate. Arg159 and Arg211 together coordinate L-aspartate. Carbamoyl phosphate-binding residues include Ser252 and Pro253.

The protein belongs to the aspartate/ornithine carbamoyltransferase superfamily. ATCase family. As to quaternary structure, heterododecamer (2C3:3R2) of six catalytic PyrB chains organized as two trimers (C3), and six regulatory PyrI chains organized as three dimers (R2).

It carries out the reaction carbamoyl phosphate + L-aspartate = N-carbamoyl-L-aspartate + phosphate + H(+). The protein operates within pyrimidine metabolism; UMP biosynthesis via de novo pathway; (S)-dihydroorotate from bicarbonate: step 2/3. Functionally, catalyzes the condensation of carbamoyl phosphate and aspartate to form carbamoyl aspartate and inorganic phosphate, the committed step in the de novo pyrimidine nucleotide biosynthesis pathway. The sequence is that of Aspartate carbamoyltransferase catalytic subunit from Listeria innocua serovar 6a (strain ATCC BAA-680 / CLIP 11262).